The sequence spans 317 residues: tRNA dimethylallyltransferase (317 aa).

Residue 14 to 21 participates in ATP binding; sequence GPTAVGKT. 16–21 provides a ligand contact to substrate; it reads TAVGKT. An interaction with substrate tRNA region spans residues 39–42; the sequence is DSMQ.

The protein belongs to the IPP transferase family. Monomer. The cofactor is Mg(2+).

The enzyme catalyses adenosine(37) in tRNA + dimethylallyl diphosphate = N(6)-dimethylallyladenosine(37) in tRNA + diphosphate. In terms of biological role, catalyzes the transfer of a dimethylallyl group onto the adenine at position 37 in tRNAs that read codons beginning with uridine, leading to the formation of N6-(dimethylallyl)adenosine (i(6)A). The protein is tRNA dimethylallyltransferase of Bacillus cereus (strain G9842).